The chain runs to 373 residues: XK-related protein 9 (373 aa).

The next 8 membrane-spanning stretches (helical) occupy residues 8-28 (FMMSVLGIIIYVTDLVADIVL), 38-58 (YVLGVLTLSFVLCGTLIVHCF), 166-186 (MVIMVSCCAISWSTVDYQIAL), 206-226 (LFYKLLTLLSWMLSVVLLLFV), 230-250 (VALLLLLFLWITGFIWAFINH), 256-276 (SVSMEFLYRIVVGFILVFTFF), 295-315 (VLGTLGILTVFWIYPLSIFNS), and 318-338 (FIPISATIVLALLLGIIFLGV).

Belongs to the XK family. In terms of processing, undergoes proteolytic processing by caspase-3 (CASP3), caspase-6 (CASP6) and caspase-7 (CASP7) to generate the XK-related protein 9, processed form, leading to its activation. In terms of tissue distribution, highly expressed in the small intestines; weakly expressed in the pancreas, liver, stomach, and large intestines.

The protein localises to the cell membrane. The enzyme catalyses a 1,2-diacyl-sn-glycero-3-phospho-L-serine(in) = a 1,2-diacyl-sn-glycero-3-phospho-L-serine(out). With respect to regulation, activated upon caspase cleavage to generate the XK-related protein 9, processed form. Does not act prior the onset of apoptosis. Phospholipid scramblase that promotes phosphatidylserine exposure on apoptotic cell surface. Phosphatidylserine is a specific marker only present at the surface of apoptotic cells and acts as a specific signal for engulfment. The polypeptide is XK-related protein 9 (Mus musculus (Mouse)).